Here is a 215-residue protein sequence, read N- to C-terminus: Ras-related protein Rab-42 (215 aa).

5 residues coordinate GTP: Gly19, Gly21, Lys22, Thr23, and Thr44. 3 residues coordinate Mg(2+): Thr23, Thr44, and Asp68. 5 residues coordinate GTP: Gly71, Lys128, Asp130, Ala157, and Lys158. The disordered stretch occupies residues 196-215 (HRSPNPRSSSRKQDSGTCQC). S-geranylgeranyl cysteine attachment occurs at residues Cys213 and Cys215.

It belongs to the small GTPase superfamily. Rab family. The cofactor is Mg(2+).

It localises to the membrane. The enzyme catalyses GTP + H2O = GDP + phosphate + H(+). With respect to regulation, regulated by guanine nucleotide exchange factors (GEFs) which promote the exchange of bound GDP for free GTP. Regulated by GTPase activating proteins (GAPs) which increase the GTP hydrolysis activity. Inhibited by GDP dissociation inhibitors (GDIs). Functionally, the small GTPases Rab are key regulators of intracellular membrane trafficking, from the formation of transport vesicles to their fusion with membranes. Rabs cycle between an inactive GDP-bound form and an active GTP-bound form that is able to recruit to membranes different sets of downstream effectors directly responsible for vesicle formation, movement, tethering and fusion. The physiological function of RAB42 remains undefined. The polypeptide is Ras-related protein Rab-42 (Mus musculus (Mouse)).